We begin with the raw amino-acid sequence, 177 residues long: ATP synthase subunit delta (177 aa).

The protein belongs to the ATPase delta chain family. As to quaternary structure, F-type ATPases have 2 components, F(1) - the catalytic core - and F(0) - the membrane proton channel. F(1) has five subunits: alpha(3), beta(3), gamma(1), delta(1), epsilon(1). F(0) has three main subunits: a(1), b(2) and c(10-14). The alpha and beta chains form an alternating ring which encloses part of the gamma chain. F(1) is attached to F(0) by a central stalk formed by the gamma and epsilon chains, while a peripheral stalk is formed by the delta and b chains.

It is found in the cell inner membrane. F(1)F(0) ATP synthase produces ATP from ADP in the presence of a proton or sodium gradient. F-type ATPases consist of two structural domains, F(1) containing the extramembraneous catalytic core and F(0) containing the membrane proton channel, linked together by a central stalk and a peripheral stalk. During catalysis, ATP synthesis in the catalytic domain of F(1) is coupled via a rotary mechanism of the central stalk subunits to proton translocation. Its function is as follows. This protein is part of the stalk that links CF(0) to CF(1). It either transmits conformational changes from CF(0) to CF(1) or is implicated in proton conduction. This is ATP synthase subunit delta from Flavobacterium johnsoniae (strain ATCC 17061 / DSM 2064 / JCM 8514 / BCRC 14874 / CCUG 350202 / NBRC 14942 / NCIMB 11054 / UW101) (Cytophaga johnsonae).